The primary structure comprises 881 residues: DNA mismatch repair protein MutS (881 aa).

Residue 626-633 participates in ATP binding; the sequence is GPNMAGKS.

The protein belongs to the DNA mismatch repair MutS family.

Its function is as follows. This protein is involved in the repair of mismatches in DNA. It is possible that it carries out the mismatch recognition step. This protein has a weak ATPase activity. This Desulfosudis oleivorans (strain DSM 6200 / JCM 39069 / Hxd3) (Desulfococcus oleovorans) protein is DNA mismatch repair protein MutS.